A 535-amino-acid polypeptide reads, in one-letter code: UDP-glycosyltransferase stmC (535 aa).

N-linked (GlcNAc...) asparagine glycans are attached at residues Asn-70 and Asn-422. Residues 506–526 (ASNLDLYIVCIAFVAVPVGVA) form a helical membrane-spanning segment.

The protein belongs to the glycosyltransferase 28 family.

The protein resides in the membrane. It carries out the reaction stromemycin aglycone + UDP-alpha-D-glucose = stromemycin + UDP + H(+). It catalyses the reaction exophillate aglycone + UDP-alpha-D-glucose = exophillate + UDP + H(+). It functions in the pathway mycotoxin biosynthesis. UDP-glycosyltransferase; part of the gene cluster that mediates the biosynthesis of stromemycin, a depside C-glucoside with two unsaturated C9 side chains belonging to aromatic polyketide glycosides. Acts as the tailoring enzyme responsible for 3-C-glucosylation of bininalkenylresorcylic acid produced by the combined action of the HR-PKS stmA and the NR-PKS stmB to yield stromemycin. Possesses a relatively strict acceptor specificity towards bininalkenylresorcylic acid for C-glycosylation, but is able to use several donors including UDP-alpha-D-galactose, UDP-alpha-D-xylose, UDP-alpha-D-4-keto-6-deoxyglucose, UDP-alpha-D-quinovose, and UDP-beta-L-rhamnose. This chain is UDP-glycosyltransferase stmC, found in Aspergillus ustus.